The chain runs to 294 residues: Cytidine deaminase (294 aa).

CMP/dCMP-type deaminase domains are found at residues 48 to 168 and 186 to 294; these read DEDA…FGPK and LTGD…VLLG. 89–91 serves as a coordination point for substrate; that stretch reads NME. Histidine 102 contacts Zn(2+). Glutamate 104 acts as the Proton donor in catalysis. 2 residues coordinate Zn(2+): cysteine 129 and cysteine 132.

It belongs to the cytidine and deoxycytidylate deaminase family. Homodimer. Requires Zn(2+) as cofactor.

It catalyses the reaction cytidine + H2O + H(+) = uridine + NH4(+). The catalysed reaction is 2'-deoxycytidine + H2O + H(+) = 2'-deoxyuridine + NH4(+). In terms of biological role, this enzyme scavenges exogenous and endogenous cytidine and 2'-deoxycytidine for UMP synthesis. This chain is Cytidine deaminase, found in Salmonella enteritidis PT4 (strain P125109).